The sequence spans 531 residues: Peptide chain release factor 3 (531 aa).

In terms of domain architecture, tr-type G spans 10-278 (RRRRTFAIIS…SLIEWAPAPK (269 aa)). Residues 19–26 (SHPDAGKT), 87–91 (DTPGH), and 141–144 (NKYD) each bind GTP.

The protein belongs to the TRAFAC class translation factor GTPase superfamily. Classic translation factor GTPase family. PrfC subfamily.

It localises to the cytoplasm. Increases the formation of ribosomal termination complexes and stimulates activities of RF-1 and RF-2. It binds guanine nucleotides and has strong preference for UGA stop codons. It may interact directly with the ribosome. The stimulation of RF-1 and RF-2 is significantly reduced by GTP and GDP, but not by GMP. The chain is Peptide chain release factor 3 from Neisseria meningitidis serogroup A / serotype 4A (strain DSM 15465 / Z2491).